Consider the following 290-residue polypeptide: Ribosomal RNA small subunit methyltransferase A (290 aa).

Residues Asn-27, Leu-29, Gly-54, Glu-75, Asp-100, and Asn-125 each contribute to the S-adenosyl-L-methionine site.

It belongs to the class I-like SAM-binding methyltransferase superfamily. rRNA adenine N(6)-methyltransferase family. RsmA subfamily.

Its subcellular location is the cytoplasm. The enzyme catalyses adenosine(1518)/adenosine(1519) in 16S rRNA + 4 S-adenosyl-L-methionine = N(6)-dimethyladenosine(1518)/N(6)-dimethyladenosine(1519) in 16S rRNA + 4 S-adenosyl-L-homocysteine + 4 H(+). In terms of biological role, specifically dimethylates two adjacent adenosines (A1518 and A1519) in the loop of a conserved hairpin near the 3'-end of 16S rRNA in the 30S particle. May play a critical role in biogenesis of 30S subunits. This chain is Ribosomal RNA small subunit methyltransferase A, found in Streptococcus thermophilus (strain ATCC BAA-250 / LMG 18311).